The sequence spans 297 residues: Acetylglutamate kinase (297 aa).

Substrate contacts are provided by residues 68–69 (GG), Arg-90, and Asn-195.

This sequence belongs to the acetylglutamate kinase family. ArgB subfamily.

The protein resides in the cytoplasm. The catalysed reaction is N-acetyl-L-glutamate + ATP = N-acetyl-L-glutamyl 5-phosphate + ADP. Its pathway is amino-acid biosynthesis; L-arginine biosynthesis; N(2)-acetyl-L-ornithine from L-glutamate: step 2/4. Functionally, catalyzes the ATP-dependent phosphorylation of N-acetyl-L-glutamate. In Chelativorans sp. (strain BNC1), this protein is Acetylglutamate kinase.